The primary structure comprises 558 residues: SPATS2-like protein (558 aa).

Ala-2 is subject to N-acetylalanine. Positions 63-79 are enriched in basic residues; it reads GKKKNNKRKRSKSKQHQ. Residues 63 to 204 are disordered; it reads GKKKNNKRKR…SPVKSNAPAA (142 aa). Composition is skewed to basic and acidic residues over residues 80 to 92 and 110 to 142; these read GNKD…ERPE and GCEK…EPPR. Ser-120 is modified (phosphoserine). Positions 279–344 form a coiled coil; that stretch reads KEEAMDILTA…ARFSCDIEQL (66 aa). 2 disordered regions span residues 385-406 and 421-514; these read GNFA…ANPK and TMPT…RQHA. The span at 421 to 433 shows a compositional bias: polar residues; that stretch reads TMPTNKQQNGPSS. Basic residues predominate over residues 469 to 485; it reads HEHRRQPHNGFRPKNKG.

This sequence belongs to the SPATS2 family.

It is found in the cytoplasm. The protein localises to the nucleus. It localises to the nucleolus. This Mus musculus (Mouse) protein is SPATS2-like protein (Spats2l).